The sequence spans 281 residues: Pantothenate synthetase (281 aa).

Residue 30–37 coordinates ATP; sequence MGNLHQGH. Residue His-37 is the Proton donor of the active site. Gln-61 serves as a coordination point for (R)-pantoate. Beta-alanine is bound at residue Gln-61. 149 to 152 is an ATP binding site; sequence GNKD. A (R)-pantoate-binding site is contributed by Gln-155. ATP is bound by residues Ile-178 and 186-189; that span reads MSSR.

This sequence belongs to the pantothenate synthetase family. Homodimer.

The protein resides in the cytoplasm. The catalysed reaction is (R)-pantoate + beta-alanine + ATP = (R)-pantothenate + AMP + diphosphate + H(+). The protein operates within cofactor biosynthesis; (R)-pantothenate biosynthesis; (R)-pantothenate from (R)-pantoate and beta-alanine: step 1/1. Its function is as follows. Catalyzes the condensation of pantoate with beta-alanine in an ATP-dependent reaction via a pantoyl-adenylate intermediate. This is Pantothenate synthetase from Shewanella baltica (strain OS185).